A 384-amino-acid chain; its full sequence is dTDP-dihydrostreptose--streptidine-6-phosphate dihydrostreptosyltransferase (384 aa).

The catalysed reaction is dTDP-L-dihydrostreptose + streptidine 6-phosphate = O-(1-&gt;4)-alpha-L-dihydrostreptosyl-streptidine 6-phosphate + dTDP + H(+). Its pathway is antibiotic biosynthesis; streptomycin biosynthesis. Is probably a dihydrostreptosyl glycosyltransferase, involved in the first glycosylation step condensing streptidine-6-phosphate and dihydrostreptose. The protein is dTDP-dihydrostreptose--streptidine-6-phosphate dihydrostreptosyltransferase (strH) of Streptomyces griseus.